The following is a 240-amino-acid chain: MIKQFFSNVYEGIKHYSNYLWELSKKQLIKIYLNKKHLIWKISIILICAFIVLLTSFLTRNSILNATQSYWELIPGFLVINITGNTGVSFGTLGDSNPSLVYFVQSIPIVLGFFVLLFSSNYLLDIGVSLVFFGGLSNIIDRSIVDNYKYLSGISTNNAVVDYFQFPFIKNSAIFNFPDTFVIIGMIFVGIQIIISFVKDYKKEKDSEENKKPIKDVVLDEERNKTKKEPIKKPIVIQKS.

Transmembrane regions (helical) follow at residues 38-58 (LIWK…TSFL), 73-93 (LIPG…FGTL), 98-118 (PSLV…VLLF), and 120-140 (SNYL…SNII). Residues Asp162 and Asp179 contribute to the active site. The helical transmembrane segment at 177–197 (FPDTFVIIGMIFVGIQIIISF) threads the bilayer.

It belongs to the peptidase A8 family.

It is found in the cell membrane. It carries out the reaction Release of signal peptides from bacterial membrane prolipoproteins. Hydrolyzes -Xaa-Yaa-Zaa-|-(S,diacylglyceryl)Cys-, in which Xaa is hydrophobic (preferably Leu), and Yaa (Ala or Ser) and Zaa (Gly or Ala) have small, neutral side chains.. It functions in the pathway protein modification; lipoprotein biosynthesis (signal peptide cleavage). This protein specifically catalyzes the removal of signal peptides from prolipoproteins. This chain is Lipoprotein signal peptidase, found in Malacoplasma penetrans (strain HF-2) (Mycoplasma penetrans).